Reading from the N-terminus, the 355-residue chain is Serum paraoxonase/arylesterase 1 (355 aa).

Cys-42 and Cys-353 form a disulfide bridge. The Ca(2+) site is built by Glu-53 and Asp-54. His-115 functions as the Proton acceptor in the catalytic mechanism. Ca(2+)-binding residues include Ile-117, Asn-168, Asp-169, and Asn-224. N-linked (GlcNAc...) asparagine glycosylation is present at Asn-253. Positions 269 and 270 each coordinate Ca(2+). N-linked (GlcNAc...) asparagine glycans are attached at residues Asn-270 and Asn-324.

This sequence belongs to the paraoxonase family. Homodimer. Heterooligomer with phosphate-binding protein (HPBP). Interacts with CLU. It depends on Ca(2+) as a cofactor. In terms of processing, glycosylated. Post-translationally, the signal sequence is not cleaved. Present in two forms, form B contains a disulfide bond, form A does not. Plasma, associated with HDL (at protein level). Expressed in liver, but not in heart, brain, placenta, lung, skeletal muscle, kidney or pancreas.

It localises to the secreted. The protein localises to the extracellular space. It catalyses the reaction a phenyl acetate + H2O = a phenol + acetate + H(+). The enzyme catalyses An aryl dialkyl phosphate + H2O = dialkyl phosphate + an aryl alcohol.. The catalysed reaction is an N-acyl-L-homoserine lactone + H2O = an N-acyl-L-homoserine + H(+). Hydrolyzes the toxic metabolites of a variety of organophosphorus insecticides. Capable of hydrolyzing a broad spectrum of organophosphate substrates and lactones, and a number of aromatic carboxylic acid esters. Mediates an enzymatic protection of low density lipoproteins against oxidative modification and the consequent series of events leading to atheroma formation. The sequence is that of Serum paraoxonase/arylesterase 1 (PON1) from Homo sapiens (Human).